Reading from the N-terminus, the 185-residue chain is Elongation factor P (185 aa).

This sequence belongs to the elongation factor P family.

The protein resides in the cytoplasm. It participates in protein biosynthesis; polypeptide chain elongation. Its function is as follows. Involved in peptide bond synthesis. Stimulates efficient translation and peptide-bond synthesis on native or reconstituted 70S ribosomes in vitro. Probably functions indirectly by altering the affinity of the ribosome for aminoacyl-tRNA, thus increasing their reactivity as acceptors for peptidyl transferase. This chain is Elongation factor P, found in Halalkalibacterium halodurans (strain ATCC BAA-125 / DSM 18197 / FERM 7344 / JCM 9153 / C-125) (Bacillus halodurans).